A 663-amino-acid chain; its full sequence is DNA topoisomerase 4 subunit B (663 aa).

ATP contacts are provided by residues Tyr-21, Asn-61, Asp-88, 130–136 (GLHGVGI), and Lys-360. The region spanning 440–554 (TELFIVEGDS…EGHLYLAKPP (115 aa)) is the Toprim domain. The Mg(2+) site is built by Glu-446, Asp-519, and Asp-521.

This sequence belongs to the type II topoisomerase family. ParE type 1 subfamily. Heterotetramer composed of ParC and ParE. The cofactor is Mg(2+). Requires Mn(2+) as cofactor. It depends on Ca(2+) as a cofactor.

The catalysed reaction is ATP-dependent breakage, passage and rejoining of double-stranded DNA.. Topoisomerase IV is essential for chromosome segregation. It relaxes supercoiled DNA. Performs the decatenation events required during the replication of a circular DNA molecule. This chain is DNA topoisomerase 4 subunit B, found in Rickettsia typhi (strain ATCC VR-144 / Wilmington).